We begin with the raw amino-acid sequence, 186 residues long: MAGNKKRGGRNMDQVKKAAVRSDGVGGSATNAELPMANLVRLIKKVLPGKAKIGGAAKGLTHDCAVEFVGFVGDEASEKAKAEHRRTVAPEDYLGSFGDLGFDRYVDPMDAYIHGYREFERAGGNRRVAPPPPAAATPLTPGGPTFTDAELQFLRSVIPSRSDDEYSGSSPAIGGYGYGYGYGKNM.

The tract at residues 1–24 is disordered; the sequence is MAGNKKRGGRNMDQVKKAAVRSDG. Residues 34–40 mediate DNA binding; it reads LPMANLV. A subunit association domain (SAD) region spans residues 61–72; that stretch reads THDCAVEFVGFV. The segment at 123-142 is disordered; the sequence is GGNRRVAPPPPAAATPLTPG.

This sequence belongs to the NFYB/HAP3 subunit family. In terms of assembly, heterotrimeric transcription factor composed of three components, NF-YA, NF-YB and NF-YC. NF-YB and NF-YC must interact and dimerize for NF-YA association and DNA binding. Interacts with MADS18. Forms a ternary complex with the MADS6-MADS18 heterodimer. As to expression, expressed in developing kernels.

The protein localises to the nucleus. Component of the NF-Y/HAP transcription factor complex. The NF-Y complex stimulates the transcription of various genes by recognizing and binding to a CCAAT motif in promoters. May act through association with MADS-box proteins. May regulate the expression of genes involved in flowering. The chain is Nuclear transcription factor Y subunit B-1 (NFYB1) from Oryza sativa subsp. japonica (Rice).